We begin with the raw amino-acid sequence, 223 residues long: Cytochrome c biogenesis ATP-binding export protein CcmA (223 aa).

In terms of domain architecture, ABC transporter spans 20-222 (LAAHALTYSR…PTRLLHLKKA (203 aa)). ATP is bound at residue 52-59 (GPNGIGKT).

It belongs to the ABC transporter superfamily. CcmA exporter (TC 3.A.1.107) family. In terms of assembly, the complex is composed of two ATP-binding proteins (CcmA) and two transmembrane proteins (CcmB).

It localises to the cell inner membrane. It carries out the reaction heme b(in) + ATP + H2O = heme b(out) + ADP + phosphate + H(+). Its function is as follows. Part of the ABC transporter complex CcmAB involved in the biogenesis of c-type cytochromes; once thought to export heme, this seems not to be the case, but its exact role is uncertain. Responsible for energy coupling to the transport system. The chain is Cytochrome c biogenesis ATP-binding export protein CcmA from Xylella fastidiosa (strain 9a5c).